Here is a 262-residue protein sequence, read N- to C-terminus: Large ribosomal subunit protein uL10m (262 aa).

A mitochondrion-targeting transit peptide spans 1–28 (MAAAVAGILRGGLPPRAAWLPTLQTVRH). Residues 243–262 (GDCATSANEKLHPPDPAPDA) are disordered.

Belongs to the universal ribosomal protein uL10 family. Component of the mitochondrial ribosome large subunit (39S) which comprises a 16S rRNA and about 50 distinct proteins.

It localises to the mitochondrion. The sequence is that of Large ribosomal subunit protein uL10m (Mrpl10) from Mus musculus (Mouse).